We begin with the raw amino-acid sequence, 591 residues long: Acyl-CoA-dependent acyltransferase MAC1 (591 aa).

A peroxisomal targeting signal type 1 region spans residues 589–591 (ARL).

The protein belongs to the trichothecene O-acetyltransferase family.

It localises to the peroxisome. Its pathway is secondary metabolite biosynthesis. Its function is as follows. Acyl-CoA-dependent acyltransferase; part of the gene cluster that mediates the biosynthesis of mannosylerythritol lipids (MELs), surface-active substances that enhance the availability of water-insoluble substrates. Mannosylerythritol lipid production is responsible for hemolytic activity of Ustilago maydis. Depending on the number of acetyl groups, mannosylerythritol lipids can be differentiated into MEL A (fully acetylated), MEL B and MEL C (monoacetylated at R-6 and R-4, respectively), and the fully deacetylated MEL D. The first step in the pathway is the generation of mannosylerythritol by the glycosyltransferase EMT1 which catalyzes the transfer of GDP-mannose to the C-4 atom of meso-erythritol. This reaction has to be stereospecific, since only mannosyl-D-erythritol is generated. The produced disaccharide is subsequently acylated with fatty acids of various lengths derived from the peroxisomal beta-oxidation by the peroxisomal acyltransferases MAC1 and MAC2 at positions C-2 and C-3, repectively. The existence of MEL derivatives which carry an acetyl group at C-2 implies that at least MAC1 also accepts acetyl-CoA as a donor. The final step of MEL biosynthesis is the acetylation of the fully acylated mannosylerythritol lipids catalyzed by the acetyl-CoA-dependent acetyltransferase MAT1. MAT1 displays a relaxed regioselectivity and is able to transfer acetylgroups to both positions C-4 and C-6 of the mannosyl moiety. This is Acyl-CoA-dependent acyltransferase MAC1 from Mycosarcoma maydis (Corn smut fungus).